The following is a 1261-amino-acid chain: Rho GTPase-activating protein 29 (1261 aa).

Serine 171, serine 176, serine 179, and serine 190 each carry phosphoserine. The F-BAR domain occupies 192–462; the sequence is LELDNVLLKN…SAKLYDPGQE (271 aa). Residues 296–418 are a coiled coil; that stretch reads RKNEMEKQRK…EILAQLRTLV (123 aa). Residues 481–501 are disordered; sequence NVNKHLNSSQPSGFGPANSLE. Residues serine 499, serine 519, and serine 552 each carry the phosphoserine modification. The segment covering 541 to 559 has biased composition (low complexity); that stretch reads SESTGGSSESRSLDSESIS. The tract at residues 541–600 is disordered; it reads SESTGGSSESRSLDSESISPGDFHRKLPRTPSSGTMSSADDLDEREPPSPSETGPNSLGT. The Phorbol-ester/DAG-type zinc-finger motif lies at 612–657; it reads THKFRKLRSPTKCRDCEGIVVFQGVECEECLLVCHRKCLENLVIIC. Residues 671 to 886 enclose the Rho-GAP domain; the sequence is AEFTQVAKKE…FLITYSQKIF (216 aa). Residues serine 913 and serine 949 each carry the phosphoserine modification. Residues 981-1011 are disordered; sequence SASQKIEDGKTPKPLSLKSDRSTNNVERHTP. Residues 998-1010 are compositionally biased toward basic and acidic residues; sequence KSDRSTNNVERHT. Phosphoserine is present on residues serine 1019, serine 1144, and serine 1146. Disordered regions lie at residues 1117 to 1153 and 1178 to 1238; these read HSIN…APVR and GNEE…VNPM. Residues 1133–1144 are compositionally biased toward basic and acidic residues; the sequence is RSVREASERRSS. The tract at residues 1258–1261 is interaction with PTPN13/PTPL1; the sequence is PQFV.

As to quaternary structure, interacts with PTPN13/PTPL1. Interacts with RAP2A via its coiled coil domain. Interacts with RASIP1. In terms of tissue distribution, widely expressed. Highly expressed in skeletal muscle and heart. Expressed at intermediate level in placenta, liver and pancreas. Weakly expressed in brain, lung and kidney.

In terms of biological role, GTPase activator for the Rho-type GTPases by converting them to an inactive GDP-bound state. Has strong activity toward RHOA, and weaker activity toward RAC1 and CDC42. May act as a specific effector of RAP2A to regulate Rho. In concert with RASIP1, suppresses RhoA signaling and dampens ROCK and MYH9 activities in endothelial cells and plays an essential role in blood vessel tubulogenesis. In Homo sapiens (Human), this protein is Rho GTPase-activating protein 29 (ARHGAP29).